The primary structure comprises 412 residues: Argininosuccinate synthase (412 aa).

A10 to S18 provides a ligand contact to ATP. Y89 lines the L-citrulline pocket. G119 contributes to the ATP binding site. Positions 121, 125, and 126 each coordinate L-aspartate. N125 lines the L-citrulline pocket. The L-citrulline site is built by R129, S177, E261, and Y273.

The protein belongs to the argininosuccinate synthase family. Type 1 subfamily. Homotetramer.

The protein localises to the cytoplasm. The catalysed reaction is L-citrulline + L-aspartate + ATP = 2-(N(omega)-L-arginino)succinate + AMP + diphosphate + H(+). It participates in amino-acid biosynthesis; L-arginine biosynthesis; L-arginine from L-ornithine and carbamoyl phosphate: step 2/3. This Bifidobacterium longum (strain DJO10A) protein is Argininosuccinate synthase.